A 335-amino-acid chain; its full sequence is Glycerol-3-phosphate dehydrogenase [NAD(P)+] (335 aa).

Positions 10, 11, 31, and 105 each coordinate NADPH. Sn-glycerol 3-phosphate contacts are provided by Lys-105, Gly-136, and Ser-138. Residue Ala-140 participates in NADPH binding. Residues Lys-191, Asp-244, Ser-254, Arg-255, and Asn-256 each contribute to the sn-glycerol 3-phosphate site. Catalysis depends on Lys-191, which acts as the Proton acceptor. Arg-255 is a binding site for NADPH. NADPH contacts are provided by Val-279 and Glu-281.

The protein belongs to the NAD-dependent glycerol-3-phosphate dehydrogenase family.

The protein localises to the cytoplasm. It carries out the reaction sn-glycerol 3-phosphate + NAD(+) = dihydroxyacetone phosphate + NADH + H(+). The enzyme catalyses sn-glycerol 3-phosphate + NADP(+) = dihydroxyacetone phosphate + NADPH + H(+). Its pathway is membrane lipid metabolism; glycerophospholipid metabolism. Catalyzes the reduction of the glycolytic intermediate dihydroxyacetone phosphate (DHAP) to sn-glycerol 3-phosphate (G3P), the key precursor for phospholipid synthesis. The protein is Glycerol-3-phosphate dehydrogenase [NAD(P)+] of Leptospira interrogans serogroup Icterohaemorrhagiae serovar Lai (strain 56601).